The primary structure comprises 229 residues: NAD(P)H-quinone oxidoreductase subunit K, chloroplastic (229 aa).

[4Fe-4S] cluster contacts are provided by Cys-43, Cys-44, Cys-108, and Cys-139.

The protein belongs to the complex I 20 kDa subunit family. As to quaternary structure, NDH is composed of at least 16 different subunits, 5 of which are encoded in the nucleus. [4Fe-4S] cluster is required as a cofactor.

Its subcellular location is the plastid. It is found in the chloroplast thylakoid membrane. It catalyses the reaction a plastoquinone + NADH + (n+1) H(+)(in) = a plastoquinol + NAD(+) + n H(+)(out). The catalysed reaction is a plastoquinone + NADPH + (n+1) H(+)(in) = a plastoquinol + NADP(+) + n H(+)(out). Functionally, NDH shuttles electrons from NAD(P)H:plastoquinone, via FMN and iron-sulfur (Fe-S) centers, to quinones in the photosynthetic chain and possibly in a chloroplast respiratory chain. The immediate electron acceptor for the enzyme in this species is believed to be plastoquinone. Couples the redox reaction to proton translocation, and thus conserves the redox energy in a proton gradient. The sequence is that of NAD(P)H-quinone oxidoreductase subunit K, chloroplastic from Aethionema grandiflorum (Persian stone-cress).